The following is a 105-amino-acid chain: Small ribosomal subunit protein uS10 (105 aa).

It belongs to the universal ribosomal protein uS10 family. Part of the 30S ribosomal subunit.

Involved in the binding of tRNA to the ribosomes. This Rickettsia felis (strain ATCC VR-1525 / URRWXCal2) (Rickettsia azadi) protein is Small ribosomal subunit protein uS10.